We begin with the raw amino-acid sequence, 429 residues long: SH2 domain-containing protein 5 (429 aa).

The region spanning 302-398 (WAFAGLSRSC…LSMGRLNPTY (97 aa)) is the SH2 domain.

As to quaternary structure, interacts with BCR. As to expression, highly expressed in brain, particularly in Purkinjie cells in the cerebellum and the cornu ammonis of the hippocampus.

The protein resides in the postsynaptic density. Its function is as follows. May be involved in synaptic plasticity regulation through the control of Rac-GTP levels. The polypeptide is SH2 domain-containing protein 5 (Mus musculus (Mouse)).